The following is a 60-amino-acid chain: Large ribosomal subunit protein uL30 (60 aa).

It belongs to the universal ribosomal protein uL30 family. In terms of assembly, part of the 50S ribosomal subunit.

The chain is Large ribosomal subunit protein uL30 from Staphylococcus epidermidis (strain ATCC 35984 / DSM 28319 / BCRC 17069 / CCUG 31568 / BM 3577 / RP62A).